A 684-amino-acid chain; its full sequence is Histamine oxidase (684 aa).

Tyrosine 316 to aspartate 327 contributes to the substrate binding site. Aspartate 318 (proton acceptor) is an active-site residue. A disulfide bridge links cysteine 337 with cysteine 363. Valine 399 to tyrosine 404 contacts substrate. The Schiff-base intermediate with substrate; via topaquinone role is filled by tyrosine 402. Tyrosine 402 carries the post-translational modification 2',4',5'-topaquinone. Positions 451 and 453 each coordinate Cu cation. Residues aspartate 460, glutamate 500, tyrosine 590, and aspartate 601 each contribute to the Ca(2+) site. Aspartate 460 serves as a coordination point for Mn(2+). Residue aspartate 601 participates in Mn(2+) binding. Histidine 612 provides a ligand contact to Cu cation. Residues serine 647–histidine 684 are disordered. The segment covering aspartate 675 to histidine 684 has biased composition (gly residues).

It belongs to the copper/topaquinone oxidase family. Homodimer. Cu cation serves as cofactor. It depends on Zn(2+) as a cofactor. Ca(2+) is required as a cofactor. Requires L-topaquinone as cofactor. The cofactor is Mn(2+). In terms of processing, topaquinone (TPQ) is generated by copper-dependent autoxidation of a specific tyrosyl residue.

Its subcellular location is the cytoplasm. The catalysed reaction is a primary methyl amine + O2 + H2O = an aldehyde + H2O2 + NH4(+). It carries out the reaction histamine + O2 + H2O = imidazole-4-acetaldehyde + H2O2 + NH4(+). Functionally, oxidizes histamine. Other amines including phenethylamine, tyramine, tryptamine, putrescine, and benzylamine also serve as substrate. The sequence is that of Histamine oxidase from Arthrobacter globiformis.